Consider the following 882-residue polypeptide: Valine--tRNA ligase (882 aa).

The short motif at 45-55 is the 'HIGH' region element; the sequence is PNVTGSLHIGH. The short motif at 525 to 529 is the 'KMSKS' region element; sequence KFSKS. Lys528 lines the ATP pocket. Residues 812 to 881 adopt a coiled-coil conformation; that stretch reads EGLIDVAKEK…VLKKGIQNLA (70 aa).

It belongs to the class-I aminoacyl-tRNA synthetase family. ValS type 1 subfamily. As to quaternary structure, monomer.

It is found in the cytoplasm. It catalyses the reaction tRNA(Val) + L-valine + ATP = L-valyl-tRNA(Val) + AMP + diphosphate. Functionally, catalyzes the attachment of valine to tRNA(Val). As ValRS can inadvertently accommodate and process structurally similar amino acids such as threonine, to avoid such errors, it has a 'posttransfer' editing activity that hydrolyzes mischarged Thr-tRNA(Val) in a tRNA-dependent manner. The polypeptide is Valine--tRNA ligase (Leptospira interrogans serogroup Icterohaemorrhagiae serovar Lai (strain 56601)).